The primary structure comprises 129 residues: Putative zinc finger protein 702 (129 aa).

3 C2H2-type zinc fingers span residues 34–56 (YKCD…HRCH), 62–84 (YKCN…KAIH), and 90–112 (HKCN…HRLH).

Belongs to the krueppel C2H2-type zinc-finger protein family.

Its subcellular location is the nucleus. Its function is as follows. May be involved in transcriptional regulation. In Homo sapiens (Human), this protein is Putative zinc finger protein 702 (ZNF702P).